Here is a 954-residue protein sequence, read N- to C-terminus: Mitogen-activated protein kinase kinase kinase 10 (954 aa).

The region spanning 16-81 (PAGPVWTAVF…PSNYVAPGAP (66 aa)) is the SH3 domain. Residues 98–360 (LQLEEIIGVG…GSILKRLEVI (263 aa)) enclose the Protein kinase domain. ATP contacts are provided by residues 104–112 (IGVGGFGKV) and Lys125. Residue Asp222 is the Proton acceptor of the active site. Position 258 is a phosphothreonine; by autocatalysis (Thr258). Phosphoserine; by autocatalysis and MAP4K1 is present on Ser262. 2 leucine-zipper regions span residues 384–405 (IQHMFDDLRTKEKELRSREEEL) and 419–440 (LRRREQELAEREMDIVERELHL). Disordered regions lie at residues 490 to 665 (PTLD…RWGH), 716 to 739 (RFPRGLSPPARPHGRREDVGPGLG), and 757 to 954 (STRS…HGSH). Residues Ser498, Ser502, and Ser506 each carry the phosphoserine modification. Residues 501 to 511 (ASPPASPSIIP) show a composition bias toward low complexity. Position 558 is a phosphothreonine (Thr558). Over residues 566–578 (QKERVGGEERLKG) the composition is skewed to basic and acidic residues. Acidic residues predominate over residues 611 to 620 (EMEEFAEAED). Over residues 631-640 (STPSYLSVPL) the composition is skewed to low complexity. Over residues 773-790 (APSPPPSPPAPTPTPSPS) the composition is skewed to pro residues. Arg857 carries the post-translational modification Omega-N-methylarginine. Residues 913–927 (PSRPDTPESPGPPSV) show a composition bias toward pro residues.

The protein belongs to the protein kinase superfamily. STE Ser/Thr protein kinase family. MAP kinase kinase kinase subfamily. Homodimer. Interacts with SH3RF2. Mg(2+) serves as cofactor. In terms of processing, autophosphorylation on serine and threonine residues within the activation loop plays a role in enzyme activation. In terms of tissue distribution, expressed in brain and skeletal muscle.

It carries out the reaction L-seryl-[protein] + ATP = O-phospho-L-seryl-[protein] + ADP + H(+). The enzyme catalyses L-threonyl-[protein] + ATP = O-phospho-L-threonyl-[protein] + ADP + H(+). Homodimerization via the leucine zipper domains is required for autophosphorylation and subsequent activation. In terms of biological role, activates the JUN N-terminal pathway. This is Mitogen-activated protein kinase kinase kinase 10 (MAP3K10) from Homo sapiens (Human).